Consider the following 64-residue polypeptide: Large ribosomal subunit protein bL32 (64 aa).

Residues 1–16 (MAVQKSRKTRSRRGMR) show a composition bias toward basic residues. The disordered stretch occupies residues 1–64 (MAVQKSRKTR…TPKESYEDEE (64 aa)).

It belongs to the bacterial ribosomal protein bL32 family.

The sequence is that of Large ribosomal subunit protein bL32 from Coxiella burnetii (strain CbuK_Q154) (Coxiella burnetii (strain Q154)).